A 215-amino-acid chain; its full sequence is uncharacterized protein (215 aa).

Active-site charge relay system residues include Ser114, Asp162, and His194.

This sequence belongs to the AB hydrolase superfamily. AB hydrolase 2 family.

This is an uncharacterized protein from Rickettsia felis (strain ATCC VR-1525 / URRWXCal2) (Rickettsia azadi).